The sequence spans 592 residues: Bifunctional enzyme BirA/CoaX (592 aa).

The segment at 1–329 (MTVLKLSHWR…ISLRSDDRPV (329 aa)) is biotin--protein ligase. In terms of domain architecture, BPL/LPL catalytic spans 83–259 (QTALKHECAS…ELDAVLLQYA (177 aa)). The interval 336–592 (DSERFLLLDG…AAEGREYEHI (257 aa)) is type III pantothenate kinase. 344–351 (DGGNSRLK) is a binding site for ATP. Substrate-binding positions include Y426 and 433-436 (GSDR). D435 serves as the catalytic Proton acceptor. An ATP-binding site is contributed by T458. T508 serves as a coordination point for substrate.

It in the N-terminal section; belongs to the biotin--protein ligase family. The protein in the C-terminal section; belongs to the type III pantothenate kinase family. NH4(+) serves as cofactor. K(+) is required as a cofactor.

The protein resides in the cytoplasm. It carries out the reaction biotin + L-lysyl-[protein] + ATP = N(6)-biotinyl-L-lysyl-[protein] + AMP + diphosphate + H(+). It catalyses the reaction (R)-pantothenate + ATP = (R)-4'-phosphopantothenate + ADP + H(+). It functions in the pathway cofactor biosynthesis; coenzyme A biosynthesis; CoA from (R)-pantothenate: step 1/5. Activates biotin to form biotinyl-5'-adenylate and transfers the biotin moiety to biotin-accepting proteins. Functionally, catalyzes the phosphorylation of pantothenate (Pan), the first step in CoA biosynthesis. The polypeptide is Bifunctional enzyme BirA/CoaX (birA/coaX) (Neisseria meningitidis serogroup B (strain ATCC BAA-335 / MC58)).